The primary structure comprises 209 residues: Ras-like GTP-binding protein RYL2 (209 aa).

GTP is bound at residue 12 to 19 (GAQGVGKT). The short motif at 34–42 (QASTIGASF) is the Effector region element. GTP-binding positions include 60-64 (DTAGQ) and 118-121 (TKVD). S-geranylgeranyl cysteine attachment occurs at residues Cys-208 and Cys-209.

Belongs to the small GTPase superfamily. Rab family.

The protein localises to the cell membrane. Its function is as follows. Protein transport. Probably involved in vesicular traffic. The polypeptide is Ras-like GTP-binding protein RYL2 (RYL2) (Yarrowia lipolytica (strain CLIB 122 / E 150) (Yeast)).